The chain runs to 478 residues: Endoplasmic reticulum oxidoreductin-1 (478 aa).

Residues Met1 to Thr20 form the signal peptide. Disulfide bonds link Cys28–Cys41, Cys30–Cys39, Cys79–Cys384, Cys88–Cys93, Cys209–Cys230, and Cys387–Cys390. The segment at Ala117–Thr143 is disordered. FAD-binding residues include Arg188, Thr190, and Trp201. The FAD site is built by Ser241, His244, Arg283, and Arg295. The N-linked (GlcNAc...) asparagine glycan is linked to Asn377. Positions Glu459 to Leu478 are disordered.

Belongs to the EROs family. In terms of assembly, may function both as a monomer and a homodimer. FAD is required as a cofactor.

It localises to the endoplasmic reticulum membrane. Oxidoreductase involved in disulfide bond formation in the endoplasmic reticulum. Efficiently reoxidizes pdi-1, the enzyme catalyzing protein disulfide formation, in order to allow pdi-1 to sustain additional rounds of disulfide formation. Following pdi reoxidation, passes its electrons to molecular oxygen via FAD, leading to the production of reactive oxygen species (ROS) in the cell. This is Endoplasmic reticulum oxidoreductin-1 (ero-1) from Caenorhabditis elegans.